The sequence spans 361 residues: Peptide chain release factor 1 (361 aa).

Position 236 is an N5-methylglutamine (Q236).

It belongs to the prokaryotic/mitochondrial release factor family. Methylated by PrmC. Methylation increases the termination efficiency of RF1.

The protein resides in the cytoplasm. Functionally, peptide chain release factor 1 directs the termination of translation in response to the peptide chain termination codons UAG and UAA. The chain is Peptide chain release factor 1 from Lactobacillus acidophilus (strain ATCC 700396 / NCK56 / N2 / NCFM).